Consider the following 160-residue polypeptide: UPF0225 protein CGSHiGG_04185 (160 aa).

It belongs to the UPF0225 family.

The chain is UPF0225 protein CGSHiGG_04185 from Haemophilus influenzae (strain PittGG).